A 485-amino-acid polypeptide reads, in one-letter code: MELYYLSAKEITEKIKAKEISAVEVAKATFDRIEAVEPKIQAYVTVTRELGLKMAREVDEKIARGEDPGPLAGVPVAIKDNMSTAGIRTTCSSKILENYIPPYDATVVEKLKEAGAVFTGKTNLDEFAMGSSTENSRFFPTRNPWDLERVPGGSSGGSAASVAAGEAVVALGSDTGGSIRQPAAFCGIVGLKPTYGAVSRYGLVAFASSLDQIGPFARTVEDAALLLNVIAGHDPKDSTSADIEYPDYLSFLNQDIKGLKIGLPKEYFIDGIDAGVKKAIDDAIKVLESLGAVFEEVSLPHTKYSLPVYYLIAPAEASSNLARYDGVRYGYRDFEAEDVVEMFSRTRAEGFGAEVKRRIMLGTYALSAGYYDAYYLKALKVRTLIKEDFDRAFTKVDLLLTPTTPTPAFKFGEKTSDPVSMYLSDIFTMAVNLAGLPGISVPAGFDGHLPVSFQLIGKPFDEGTLLKVAHAFEQNTEFHKARPKL.

Active-site charge relay system residues include K79 and S154. S178 functions as the Acyl-ester intermediate in the catalytic mechanism.

It belongs to the amidase family. GatA subfamily. As to quaternary structure, heterotrimer of A, B and C subunits.

The catalysed reaction is L-glutamyl-tRNA(Gln) + L-glutamine + ATP + H2O = L-glutaminyl-tRNA(Gln) + L-glutamate + ADP + phosphate + H(+). In terms of biological role, allows the formation of correctly charged Gln-tRNA(Gln) through the transamidation of misacylated Glu-tRNA(Gln) in organisms which lack glutaminyl-tRNA synthetase. The reaction takes place in the presence of glutamine and ATP through an activated gamma-phospho-Glu-tRNA(Gln). The protein is Glutamyl-tRNA(Gln) amidotransferase subunit A of Carboxydothermus hydrogenoformans (strain ATCC BAA-161 / DSM 6008 / Z-2901).